A 104-amino-acid polypeptide reads, in one-letter code: Large ribosomal subunit protein eL30 (104 aa).

This sequence belongs to the eukaryotic ribosomal protein eL30 family.

The sequence is that of Large ribosomal subunit protein eL30 (RPL30) from Leishmania major.